The following is a 470-amino-acid chain: mRNA export factor ICP27 homolog (470 aa).

Disordered stretches follow at residues 1–31 (MALSSVSSCEPMEDEMSIMGSDTEDNFTGGD) and 73–202 (FSAS…AGDR). Polar residues predominate over residues 73 to 85 (FSASPQRAQPSNP). Composition is skewed to basic residues over residues 94 to 107 (HGRRNRRRPFRRNN) and 178 to 187 (RVHRNRRRGN). Zn(2+) contacts are provided by Cys-359, His-437, Cys-441, and Cys-446. The segment at 359 to 446 (CYLSSSGSPT…HKRRCKADTC (88 aa)) adopts a CHC2-type zinc-finger fold.

It belongs to the HHV-1 ICP27 protein family. In terms of assembly, homodimer. Homodimerization is required for transactivation. Associates in a complex with RNA, and host export factors NXF1/TAP and ALYREF; these interactions allow nuclear export of viral transcripts. Interacts with three host shuttling SR proteins SRSF1, SRSF3 and SRSF7. Interacts with host SRPK1. Interacts with IE62; this interaction enhances IE62 transactivation.

Its subcellular location is the host cytoplasm. The protein localises to the host nucleus. Its function is as follows. Multifunctional regulator of the expression of viral genes that mediates nuclear export of viral intronless mRNAs. This immediate early (EI) protein promotes the nuclear export of viral intronless mRNAs by interacting with mRNAs and host NXF1/TAP. The polypeptide is mRNA export factor ICP27 homolog (Equine herpesvirus 1 (strain Kentucky A) (EHV-1)).